Consider the following 81-residue polypeptide: Fungal defensin micasin (81 aa).

The signal sequence occupies residues 1 to 21 (MQFTKLATILLVSLMGSAAIA). Positions 22 to 43 (APATNNAAVDAAADATPAVEKR) are excised as a propeptide. Intrachain disulfides connect Cys-47–Cys-68, Cys-54–Cys-76, and Cys-58–Cys-78.

Belongs to the invertebrate defensin family.

Its subcellular location is the secreted. Functionally, antibacterial peptide with potent activity against both Gram-positive and Gram-negative bacteria. May kill bacteria via an intracellular action mode to affect protein folding. Does not show effects on tested filamentous fungi or on the yeast S.cerevisiae. Does not act by destroying the membrane integrity, which is consistent with its nonamphiphilic architecture. Acts more rapidly than vancomycin, suggesting it does not act by inhibiting cell-wall biosynthesis. Does not cause hemolysis and has no cytotoxic effect on HEK cells. In vivo, is as efficient as vancomycin to protect mouse peritonitis models from S.aureus and P.aeruginosa infections. In Arthroderma otae (Microsporum canis), this protein is Fungal defensin micasin.